Here is a 362-residue protein sequence, read N- to C-terminus: Protein-arginine kinase (362 aa).

The 232-residue stretch at 24–255 (IVLSSRIRLA…QQLIAQERMA (232 aa)) folds into the Phosphagen kinase C-terminal domain. ATP is bound by residues 27–31 (SSRIR), His92, Arg126, 177–181 (RASVM), and 208–213 (RGTYGE). The RDXXRA motif of the pArg binding pocket involved in allosteric regulation motif lies at 338–343 (RDVRRA).

The protein belongs to the ATP:guanido phosphotransferase family.

The catalysed reaction is L-arginyl-[protein] + ATP = N(omega)-phospho-L-arginyl-[protein] + ADP + H(+). With respect to regulation, appears to be allosterically activated by the binding of pArg-containing polypeptides to the pArg-binding pocket localized in the C-terminal domain of McsB. Catalyzes the specific phosphorylation of arginine residues in a large number of proteins. Is part of the bacterial stress response system. Protein arginine phosphorylation has a physiologically important role and is involved in the regulation of many critical cellular processes, such as protein homeostasis, motility, competence, and stringent and stress responses, by regulating gene expression and protein activity. The polypeptide is Protein-arginine kinase (Geobacillus sp. (strain WCH70)).